We begin with the raw amino-acid sequence, 176 residues long: Macro domain-containing protein lmo2759 (176 aa).

Residues 1–175 (MEITIVKGDI…LYNKLINSEV (175 aa)) enclose the Macro domain.

The protein belongs to the MacroD-type family.

The sequence is that of Macro domain-containing protein lmo2759 from Listeria monocytogenes serovar 1/2a (strain ATCC BAA-679 / EGD-e).